Reading from the N-terminus, the 643-residue chain is 3D-(3,5/4)-trihydroxycyclohexane-1,2-dione hydrolase (643 aa).

Position 65 (Glu-65) interacts with thiamine diphosphate. The thiamine pyrophosphate binding stretch occupies residues 441 to 521; that stretch reads SLPGDLQRMW…VNVLLFDNCG (81 aa). Residues Asp-492 and Asn-519 each contribute to the Mg(2+) site.

It belongs to the TPP enzyme family. It depends on Mg(2+) as a cofactor. Thiamine diphosphate serves as cofactor.

The catalysed reaction is 3D-3,5/4-trihydroxycyclohexane-1,2-dione + H2O = 5-deoxy-D-glucuronate + H(+). The protein operates within polyol metabolism; myo-inositol degradation into acetyl-CoA; acetyl-CoA from myo-inositol: step 3/7. Its function is as follows. Involved in the cleavage of the C1-C2 bond of 3D-(3,5/4)-trihydroxycyclohexane-1,2-dione (THcHDO) to yield 5-deoxy-glucuronate (5DG). The polypeptide is 3D-(3,5/4)-trihydroxycyclohexane-1,2-dione hydrolase (Clostridium botulinum (strain Eklund 17B / Type B)).